The sequence spans 423 residues: Histidine--tRNA ligase (423 aa).

This sequence belongs to the class-II aminoacyl-tRNA synthetase family. As to quaternary structure, homodimer.

It is found in the cytoplasm. The enzyme catalyses tRNA(His) + L-histidine + ATP = L-histidyl-tRNA(His) + AMP + diphosphate + H(+). The polypeptide is Histidine--tRNA ligase (Actinobacillus succinogenes (strain ATCC 55618 / DSM 22257 / CCUG 43843 / 130Z)).